The following is a 92-amino-acid chain: Neuropeptide F (92 aa).

Residues methionine 1 to alanine 27 form the signal peptide. A propeptide spanning residues glutamine 28 to tyrosine 51 is cleaved from the precursor. Residue phenylalanine 60 is modified to Phenylalanine amide. Positions alanine 64–arginine 92 are excised as a propeptide.

The protein belongs to the NPY family. Widely expressed in the nervous system. Expressed in corpora cardiaca, hypocerebral ganglion, frontal ganglion, protocerebrum, antennal lobe, tritocerebrum and thoracic ganglia. Not detected in corpora allata, pars intercerebralis, circumesophageal connectives, subesophageal ganglion, abdominal ganglion and abdominal perisympathetic organs.

The protein resides in the secreted. Its function is as follows. Accelerates ovarian maturation in females. The sequence is that of Neuropeptide F from Locusta migratoria (Migratory locust).